The following is a 230-amino-acid chain: MPPSINEPNLQEMFDSLAPKYDRINSILSLGMHHLWNRTFARMLGKSEHLLDLCSGTGKVAYRYIRDYPGSKATLVDFSEKMLLAAQQRYPDAPFTFIEGDIVQLPIDEESQTLASMSYGLRNLSNPKQALEEIHRILQHNGCLGILELTSPSRKHPLYLAHRLYLNFLVPWLGRLCSKNKQAYTYLAESIKKLPSDDYLEQLFQNAKFQVSKKRKLAFGSATIWILKKI.

Residues threonine 57, aspartate 77, 101-102 (DI), and serine 118 contribute to the S-adenosyl-L-methionine site.

The protein belongs to the class I-like SAM-binding methyltransferase superfamily. MenG/UbiE family.

The catalysed reaction is a 2-demethylmenaquinol + S-adenosyl-L-methionine = a menaquinol + S-adenosyl-L-homocysteine + H(+). It functions in the pathway quinol/quinone metabolism; menaquinone biosynthesis; menaquinol from 1,4-dihydroxy-2-naphthoate: step 2/2. Methyltransferase required for the conversion of demethylmenaquinol (DMKH2) to menaquinol (MKH2). This Chlamydia felis (strain Fe/C-56) (Chlamydophila felis) protein is Demethylmenaquinone methyltransferase.